Reading from the N-terminus, the 157-residue chain is Transcription elongation factor GreA (157 aa).

It belongs to the GreA/GreB family.

Its function is as follows. Necessary for efficient RNA polymerase transcription elongation past template-encoded arresting sites. The arresting sites in DNA have the property of trapping a certain fraction of elongating RNA polymerases that pass through, resulting in locked ternary complexes. Cleavage of the nascent transcript by cleavage factors such as GreA or GreB allows the resumption of elongation from the new 3'terminus. GreA releases sequences of 2 to 3 nucleotides. The polypeptide is Transcription elongation factor GreA (Maricaulis maris (strain MCS10) (Caulobacter maris)).